The sequence spans 328 residues: Urokinase plasminogen activator surface receptor (328 aa).

A signal peptide spans 1 to 24 (MGLLRRRLLLLVVVVTTCVPASQG). 3 consecutive UPAR/Ly6 domains span residues 25–118 (LRCI…GRYL), 118–213 (LECA…PPNG), and 214–299 (FQCY…RPTG). Intrachain disulfides connect Cys27-Cys48, Cys30-Cys36, and Cys41-Cys69. The N-linked (GlcNAc...) asparagine glycan is linked to Asn76. 11 cysteine pairs are disulfide-bonded: Cys95/Cys100, Cys120/Cys147, Cys123/Cys130, Cys140/Cys169, Cys175/Cys192, Cys193/Cys198, Cys216/Cys244, Cys219/Cys227, Cys237/Cys263, Cys269/Cys288, and Cys289/Cys294. N-linked (GlcNAc...) asparagine glycans are attached at residues Asn184, Asn194, Asn222, Asn255, Asn283, and Asn290. Gly299 carries the GPI-anchor amidated glycine lipid modification. A propeptide spans 300 to 328 (GAPGPGPAHLILIASLLLTLRLWGIPLWT) (removed in mature form).

In terms of assembly, monomer. Interacts (via the UPAR/Ly6 domains) with SRPX2. Interacts with MRC2. Interacts with SORL1 (via N-terminal ectodomain); this interaction decreases PLAUR internalization. The ternary complex composed of PLAUR-PLAU-SERPINE1 also interacts with SORL1. Interacts with CD82; this interaction prevents PLAUR from binding to its high affinity ligand PLAU.

It is found in the cell membrane. Its subcellular location is the secreted. Its function is as follows. Acts as a receptor for urokinase plasminogen activator. Plays a role in localizing and promoting plasmin formation. Mediates the proteolysis-independent signal transduction activation effects of U-PA. The chain is Urokinase plasminogen activator surface receptor (Plaur) from Rattus norvegicus (Rat).